The following is a 434-amino-acid chain: Histidinol dehydrogenase (434 aa).

Residues Y130, Q188, and N211 each coordinate NAD(+). S237, Q259, and H262 together coordinate substrate. Zn(2+) is bound by residues Q259 and H262. Residues E326 and H327 each act as proton acceptor in the active site. Substrate contacts are provided by H327, D360, E414, and H419. D360 contacts Zn(2+). Zn(2+) is bound at residue H419.

This sequence belongs to the histidinol dehydrogenase family. In terms of assembly, homodimer. Zn(2+) serves as cofactor.

The enzyme catalyses L-histidinol + 2 NAD(+) + H2O = L-histidine + 2 NADH + 3 H(+). The protein operates within amino-acid biosynthesis; L-histidine biosynthesis; L-histidine from 5-phospho-alpha-D-ribose 1-diphosphate: step 9/9. Its function is as follows. Catalyzes the sequential NAD-dependent oxidations of L-histidinol to L-histidinaldehyde and then to L-histidine. This chain is Histidinol dehydrogenase, found in Escherichia coli O157:H7.